A 153-amino-acid polypeptide reads, in one-letter code: MAEHLMNDVPFWQSKTLDEMSDAEWESLCDGCGQCCLHKLMDEDTDEIYFTNVACRQLNIKTCQCRNYERRFEFEPDCIKLTRENLPTFEWLPMTCAYRLLAEGKDLPVWHPLLTGSKAAMHGERISVRHIAVKESEVIDWQDHILNKPDWAQ.

This sequence belongs to the UPF0260 family.

The protein is UPF0260 protein YcgN of Shigella boydii serotype 18 (strain CDC 3083-94 / BS512).